Reading from the N-terminus, the 104-residue chain is MNRLRKGDEVIVIAGKDKGKRGSVSQVMQNGKLIVDGINLAKKHVKPNPMTGEQGGIVSKEMPVDASNVALYNPETKKADRVGVRVEGDVKTRFFKSNGKSVDA.

Belongs to the universal ribosomal protein uL24 family. In terms of assembly, part of the 50S ribosomal subunit.

In terms of biological role, one of two assembly initiator proteins, it binds directly to the 5'-end of the 23S rRNA, where it nucleates assembly of the 50S subunit. Functionally, one of the proteins that surrounds the polypeptide exit tunnel on the outside of the subunit. This Hydrogenovibrio crunogenus (strain DSM 25203 / XCL-2) (Thiomicrospira crunogena) protein is Large ribosomal subunit protein uL24.